Here is a 334-residue protein sequence, read N- to C-terminus: Serine/threonine-protein kinase (334 aa).

Positions 53 to 333 constitute a Protein kinase domain; sequence FEVLQPLQSG…DEILNFGMWT (281 aa). ATP contacts are provided by residues 59–67 and lysine 82; that span reads LQSGSEGRV. Catalysis depends on aspartate 167, which acts as the Proton acceptor.

It belongs to the protein kinase superfamily. Ser/Thr protein kinase family.

The catalysed reaction is L-seryl-[protein] + ATP = O-phospho-L-seryl-[protein] + ADP + H(+). It carries out the reaction L-threonyl-[protein] + ATP = O-phospho-L-threonyl-[protein] + ADP + H(+). Functionally, able to phosphorylate in vitro the major virion phosphoprotein phosphorylated in vivo. In Sus scrofa (Pig), this protein is Serine/threonine-protein kinase (PK).